The sequence spans 98 residues: Large ribosomal subunit protein bL27 (98 aa).

The propeptide occupies M1–F10. Positions A11–L30 are disordered.

The protein belongs to the bacterial ribosomal protein bL27 family. Post-translationally, the N-terminus is cleaved by ribosomal processing cysteine protease Prp.

In Natranaerobius thermophilus (strain ATCC BAA-1301 / DSM 18059 / JW/NM-WN-LF), this protein is Large ribosomal subunit protein bL27.